The sequence spans 107 residues: Nucleoid-associated protein Xfasm12_1216 (107 aa).

This sequence belongs to the YbaB/EbfC family. In terms of assembly, homodimer.

Its subcellular location is the cytoplasm. The protein resides in the nucleoid. Functionally, binds to DNA and alters its conformation. May be involved in regulation of gene expression, nucleoid organization and DNA protection. This chain is Nucleoid-associated protein Xfasm12_1216, found in Xylella fastidiosa (strain M12).